We begin with the raw amino-acid sequence, 221 residues long: Placenta growth factor (221 aa).

The signal sequence occupies residues 1 to 18; sequence MPVMRLFPCFLQLLAGLA. An N-linked (GlcNAc...) asparagine glycan is attached at Asn-33. 3 disulfide bridges follow: Cys-52–Cys-94, Cys-83–Cys-128, and Cys-87–Cys-130. A glycan (N-linked (GlcNAc...) asparagine) is linked at Asn-101. Positions 175–221 are disordered; the sequence is QSAVWPSSPVPEEIPRMHPGRNGKKQQRKPLREKMKPERCGDAVPRR. Residues 192–203 show a composition bias toward basic residues; it reads HPGRNGKKQQRK. Positions 193 to 213 are heparin-binding; it reads PGRNGKKQQRKPLREKMKPER. Residues 204–221 show a composition bias toward basic and acidic residues; the sequence is PLREKMKPERCGDAVPRR.

The protein belongs to the PDGF/VEGF growth factor family. Antiparallel homodimer; disulfide-linked. Also found as heterodimer with VEGFA/VEGF. Isoform PlGF-3 is found both as homodimer and as monomer. Post-translationally, N-glycosylated. While the three isoforms are present in most placental tissues, PlGF-2 is specific to early (8 week) placenta and only PlGF-1 is found in the colon and mammary carcinomas.

It is found in the secreted. Growth factor active in angiogenesis and endothelial cell growth, stimulating their proliferation and migration. It binds to the receptor FLT1/VEGFR-1. Isoform PlGF-2 binds NRP1/neuropilin-1 and NRP2/neuropilin-2 in a heparin-dependent manner. Also promotes cell tumor growth. The sequence is that of Placenta growth factor (PGF) from Homo sapiens (Human).